The sequence spans 88 residues: Sec-independent protein translocase protein TatA (88 aa).

Residues 3 to 23 (IFGVGLPEVTVILILALLIFG) traverse the membrane as a helical segment. Over residues 56-66 (MKEEDKDESPK) the composition is skewed to basic and acidic residues. The interval 56–88 (MKEEDKDESPKSIESNQSNEINQEKIDSENSNN) is disordered. Residues 67–76 (SIESNQSNEI) show a composition bias toward polar residues. Residues 77–88 (NQEKIDSENSNN) are compositionally biased toward basic and acidic residues.

The protein belongs to the TatA/E family. As to quaternary structure, forms a complex with TatC.

The protein localises to the cell inner membrane. Functionally, part of the twin-arginine translocation (Tat) system that transports large folded proteins containing a characteristic twin-arginine motif in their signal peptide across membranes. TatA could form the protein-conducting channel of the Tat system. This is Sec-independent protein translocase protein TatA from Prochlorococcus marinus (strain MIT 9301).